We begin with the raw amino-acid sequence, 489 residues long: Glutamyl-tRNA(Gln) amidotransferase subunit A (489 aa).

Residues Lys77 and Ser152 each act as charge relay system in the active site. The active-site Acyl-ester intermediate is Ser176.

It belongs to the amidase family. GatA subfamily. In terms of assembly, heterotrimer of A, B and C subunits.

It catalyses the reaction L-glutamyl-tRNA(Gln) + L-glutamine + ATP + H2O = L-glutaminyl-tRNA(Gln) + L-glutamate + ADP + phosphate + H(+). Allows the formation of correctly charged Gln-tRNA(Gln) through the transamidation of misacylated Glu-tRNA(Gln) in organisms which lack glutaminyl-tRNA synthetase. The reaction takes place in the presence of glutamine and ATP through an activated gamma-phospho-Glu-tRNA(Gln). The protein is Glutamyl-tRNA(Gln) amidotransferase subunit A of Protochlamydia amoebophila (strain UWE25).